Consider the following 320-residue polypeptide: Glutaminyl-peptide cyclotransferase (320 aa).

Residues 1-12 (MATRSPYKRQTK) are compositionally biased toward basic residues. A disordered region spans residues 1 to 22 (MATRSPYKRQTKRSMIQSLPAS). Residues 1–36 (MATRSPYKRQTKRSMIQSLPASSSASSRRRFISRKR) lie on the Cytoplasmic side of the membrane. The helical; Signal-anchor for type II membrane protein transmembrane segment at 37 to 57 (FAMMIPLALLSGAVFLFFMPF) threads the bilayer. Residues 58–320 (NSWGQSSGSS…GNYIEQQCLV (263 aa)) are Lumenal-facing. Asn-99 and Asn-163 each carry an N-linked (GlcNAc...) asparagine glycan.

This sequence belongs to the plant glutaminyl-peptide cyclotransferase family. Post-translationally, glycosylated.

It localises to the endoplasmic reticulum membrane. It catalyses the reaction N-terminal L-glutaminyl-[peptide] = N-terminal 5-oxo-L-prolyl-[peptide] + NH4(+). Its function is as follows. Converts glutamine and N-terminal glutamyl residues in peptides to 5-oxoproline and 5-oxoproline residues. Not involved in the major pathway for 5-oxoproline production. The protein is Glutaminyl-peptide cyclotransferase (QCT) of Arabidopsis thaliana (Mouse-ear cress).